Here is a 65-residue protein sequence, read N- to C-terminus: Crotamine CRO1 (65 aa).

A signal peptide spans 1-22 (MKILYLLFAFLFLAFLSEPGNA). Intrachain disulfides connect C26–C58, C33–C52, and C40–C59.

The protein belongs to the crotamine-myotoxin family. As to quaternary structure, monomer. Expressed by the venom gland.

The protein resides in the secreted. In terms of biological role, cationic peptide that possesses multiple functions. It acts as a cell-penetrating peptide (CPP), and as a potent voltage-gated potassium channel (Kv) inhibitor. It exhibits antimicrobial activities, hind limb paralysis, and severe muscle necrosis by a non-enzymatic mechanism. The protein is Crotamine CRO1 (CRO1) of Crotalus durissus terrificus (South American rattlesnake).